Reading from the N-terminus, the 286-residue chain is NAD kinase (286 aa).

Aspartate 74 serves as the catalytic Proton acceptor. Residues 74 to 75 (DG), 148 to 149 (ND), aspartate 178, alanine 186, 189 to 194 (TAYNLS), and glutamine 244 contribute to the NAD(+) site.

Belongs to the NAD kinase family. It depends on a divalent metal cation as a cofactor.

It is found in the cytoplasm. It carries out the reaction NAD(+) + ATP = ADP + NADP(+) + H(+). Its function is as follows. Involved in the regulation of the intracellular balance of NAD and NADP, and is a key enzyme in the biosynthesis of NADP. Catalyzes specifically the phosphorylation on 2'-hydroxyl of the adenosine moiety of NAD to yield NADP. The chain is NAD kinase from Campylobacter jejuni subsp. jejuni serotype O:23/36 (strain 81-176).